Here is an 890-residue protein sequence, read N- to C-terminus: Pentatricopeptide repeat-containing protein At3g57430, chloroplastic (890 aa).

The N-terminal 44 residues, 1–44, are a transit peptide targeting the chloroplast; sequence MSCPLAFTFSLPSIFPFPSQLLPFSRHKHPYLLRATPTSATEDV. PPR repeat units lie at residues 61-95, 96-130, 132-162, 163-197, 198-231, 235-265, 266-300, 301-335, 337-371, 372-398, 404-438, 439-473, 474-504, 516-550, 551-581, 582-616, 617-652, and 653-683; these read SPEW…GIKP, DNYA…GYGV, SVTV…ISER, NQVS…NVEP, SSFT…GLRK, NSFI…FGGR, DLVT…GVEP, DEFT…GSLD, NSFV…KIGL, WNAM…MEES, NSTT…GLDR, DRFV…DLVT, WNTM…ERKV, NSIT…NLAT, DVAV…IPQK, NVIT…GVKP, NEVT…GVEP, and SSDH…MPRD. A type E motif region spans residues 689-764; the sequence is AWSSLLGASR…EPGCSWIEHG (76 aa). Residues 765–795 form a type E(+) motif region; that stretch reads DEVHKFVAGDSSHPQSEKLSGYLETLWERMR. The tract at residues 796 to 890 is type DYW motif; sequence KEGYVPDTSC…NGTCSCGDYW (95 aa).

This sequence belongs to the PPR family. PCMP-H subfamily.

The protein resides in the plastid. The protein localises to the chloroplast. Its function is as follows. Involved in RNA editing events in chloroplasts. Required for the editing of a single site in ndhB and ndhF transcripts, which are two plastid-encoded subunits of the chloroplast NAD(P)H dehydrogenase (NDH) complex. Required for the editing of a single site in psbZ. Required for optimal activity of the NDH complex of the photosynthetic electron transport chain. In Arabidopsis thaliana (Mouse-ear cress), this protein is Pentatricopeptide repeat-containing protein At3g57430, chloroplastic (PCMP-H81).